Here is a 776-residue protein sequence, read N- to C-terminus: Probable E3 ubiquitin-protein ligase HECTD2 (776 aa).

Positions 1–46 are disordered; sequence MSEAVRVPSPATPLVVAAAAPEERKGKESEREKLPPIVSAGAGATA. A compositionally biased stretch (low complexity) spans 7–20; that stretch reads VPSPATPLVVAAAA. Ser-9 is modified (phosphoserine). The segment covering 21–34 has biased composition (basic and acidic residues); the sequence is PEERKGKESEREKL. The 340-residue stretch at 437 to 776 folds into the HECT domain; that stretch reads KRADLKKKLK…ISNSEGFGLE (340 aa). Cys-744 acts as the Glycyl thioester intermediate in catalysis.

The enzyme catalyses S-ubiquitinyl-[E2 ubiquitin-conjugating enzyme]-L-cysteine + [acceptor protein]-L-lysine = [E2 ubiquitin-conjugating enzyme]-L-cysteine + N(6)-ubiquitinyl-[acceptor protein]-L-lysine.. It functions in the pathway protein modification; protein ubiquitination. E3 ubiquitin-protein ligase which accepts ubiquitin from an E2 ubiquitin-conjugating enzyme in the form of a thioester and then directly transfers the ubiquitin to targeted substrates. This Pongo abelii (Sumatran orangutan) protein is Probable E3 ubiquitin-protein ligase HECTD2 (HECTD2).